A 367-amino-acid polypeptide reads, in one-letter code: Isoflavone 4'-O-methyltransferase (367 aa).

S-adenosyl-L-methionine contacts are provided by residues 209 to 212 (VGGG), aspartate 233, 233 to 234 (DQ), 253 to 254 (DM), and lysine 267. Histidine 271 serves as the catalytic Proton acceptor.

The protein belongs to the class I-like SAM-binding methyltransferase superfamily. Cation-independent O-methyltransferase family. COMT subfamily.

It catalyses the reaction a 4'-hydroxyisoflavone + S-adenosyl-L-methionine = a 4'-methoxyisoflavone + S-adenosyl-L-homocysteine + H(+). The catalysed reaction is (2R,3S)-2,4',7-trihydroxyisoflavanone + S-adenosyl-L-methionine = (2R,3S)-2,7-dihydroxy-4'-methoxyisoflavanone + S-adenosyl-L-homocysteine + H(+). Its function is as follows. 2-hydroxyisoflavanone 4'-O-methyltransferase involved in the biosynthesis of formononetin. Can use 2,7,4'-trihydroxyisoflavanone, (+)-6a-hydroxymaackiain or medicarpin as substrate, but not daidzein or (-)-6a-hydroxymaackiain. This chain is Isoflavone 4'-O-methyltransferase (HI4'OMT), found in Glycyrrhiza echinata (Licorice).